A 257-amino-acid chain; its full sequence is NH(3)-dependent NAD(+) synthetase (257 aa).

28–35 serves as a coordination point for ATP; that stretch reads GISGGVDS. Mg(2+) is bound at residue D34. R109 lines the deamido-NAD(+) pocket. ATP is bound at residue T129. Residue E134 coordinates Mg(2+). Positions 142 and 149 each coordinate deamido-NAD(+). Residues K158 and S180 each contribute to the ATP site. Position 240–241 (240–241) interacts with deamido-NAD(+); that stretch reads HK.

This sequence belongs to the NAD synthetase family. In terms of assembly, homodimer.

The enzyme catalyses deamido-NAD(+) + NH4(+) + ATP = AMP + diphosphate + NAD(+) + H(+). It functions in the pathway cofactor biosynthesis; NAD(+) biosynthesis; NAD(+) from deamido-NAD(+) (ammonia route): step 1/1. Functionally, catalyzes the ATP-dependent amidation of deamido-NAD to form NAD. Uses ammonia as a nitrogen source. The protein is NH(3)-dependent NAD(+) synthetase of Pyrococcus horikoshii (strain ATCC 700860 / DSM 12428 / JCM 9974 / NBRC 100139 / OT-3).